The primary structure comprises 199 residues: Recombination protein RecR (199 aa).

Residues 57–72 (CPICGNITEKEVCDIC) form a C4-type zinc finger. The region spanning 80 to 176 (TTIMVVEQPK…KVTRLAAGLS (97 aa)) is the Toprim domain.

Belongs to the RecR family.

In terms of biological role, may play a role in DNA repair. It seems to be involved in an RecBC-independent recombinational process of DNA repair. It may act with RecF and RecO. This chain is Recombination protein RecR, found in Lactobacillus helveticus (strain DPC 4571).